Consider the following 260-residue polypeptide: Ribonuclease HII (260 aa).

The region spanning 71 to 259 (RRIAGIDEAG…VREVLKASEQ (189 aa)) is the RNase H type-2 domain. A divalent metal cation contacts are provided by D77, E78, and D169.

The protein belongs to the RNase HII family. Requires Mn(2+) as cofactor. Mg(2+) serves as cofactor.

The protein localises to the cytoplasm. It carries out the reaction Endonucleolytic cleavage to 5'-phosphomonoester.. Functionally, endonuclease that specifically degrades the RNA of RNA-DNA hybrids. This Geobacillus kaustophilus (strain HTA426) protein is Ribonuclease HII.